The sequence spans 311 residues: Mediator of RNA polymerase II transcription subunit 27 (311 aa).

The protein belongs to the Mediator complex subunit 27 family. In terms of assembly, component of the Mediator complex.

The protein localises to the nucleus. Functionally, component of the Mediator complex, a coactivator involved in the regulated transcription of nearly all RNA polymerase II-dependent genes. Mediator functions as a bridge to convey information from gene-specific regulatory proteins to the basal RNA polymerase II transcription machinery. Mediator is recruited to promoters by direct interactions with regulatory proteins and serves as a scaffold for the assembly of a functional preinitiation complex with RNA polymerase II and the general transcription factors. Required for the development of dopaminergic amacrine cells in the retina. May also negatively regulate the development of rod photoreceptor cells. This chain is Mediator of RNA polymerase II transcription subunit 27 (med27), found in Danio rerio (Zebrafish).